The following is an 84-amino-acid chain: Cell division topological specificity factor (84 aa).

Belongs to the MinE family.

Its function is as follows. Prevents the cell division inhibition by proteins MinC and MinD at internal division sites while permitting inhibition at polar sites. This ensures cell division at the proper site by restricting the formation of a division septum at the midpoint of the long axis of the cell. The chain is Cell division topological specificity factor from Burkholderia mallei (strain NCTC 10247).